The sequence spans 472 residues: 2-methylcitrate synthase, mitochondrial (472 aa).

A mitochondrion-targeting transit peptide spans 1–29; sequence MALNLTTSRRALGSLKPLTRAAFVGARGY. Positions 75 and 193 each coordinate CoA. H271 serves as a coordination point for oxaloacetate. L306 contacts CoA. H307 is a catalytic residue. CoA contacts are provided by V348, G350, and Y351. Residues H353 and R362 each coordinate oxaloacetate. H353 is an active-site residue. 3 residues coordinate CoA: T402, K403, and N408. The active site involves D410. Residues R436 and R456 each coordinate oxaloacetate.

The protein belongs to the citrate synthase family. As to quaternary structure, homodimer.

The protein localises to the mitochondrion matrix. It carries out the reaction propanoyl-CoA + oxaloacetate + H2O = (2S,3S)-2-methylcitrate + CoA + H(+). The catalysed reaction is oxaloacetate + acetyl-CoA + H2O = citrate + CoA + H(+). It functions in the pathway organic acid metabolism; propanoate degradation. Functionally, component of the methylcitrate cycle that catalyzes the synthesis of (2S,3S)-2-methylcitrate from propionyl-CoA and oxaloacetate. Plays an important role in detoxification of propionyl-CoA, an inhibitor of both primary and secondary metabolism. Also has citrate synthase activity using as substrates acetyl-CoA and oxaloacetate. This is 2-methylcitrate synthase, mitochondrial from Fusarium solani (Filamentous fungus).